The primary structure comprises 56 residues: Large ribosomal subunit protein uL30 (56 aa).

Belongs to the universal ribosomal protein uL30 family. As to quaternary structure, part of the 50S ribosomal subunit.

The sequence is that of Large ribosomal subunit protein uL30 from Nitratidesulfovibrio vulgaris (strain DSM 19637 / Miyazaki F) (Desulfovibrio vulgaris).